The sequence spans 963 residues: Reversion-inducing cysteine-rich protein with Kazal motifs (963 aa).

A signal peptide spans 1 to 28 (MAAAVAAWPWALFCLAAVPPLLSPGAAG). One copy of the Knot 1 repeat lies at 31-78 (CCYHAKDNLMCRDVCEQILSSKSDSRLKHLLQRAPEYCPESMGEVWGC). Positions 31–332 (CCYHAKDNLM…NAVEVSMLTC (302 aa)) are 5 X Knot repeats. A glycan (N-linked (GlcNAc...) asparagine) is linked at Asn80. Knot repeat units lie at residues 98–135 (CCEL…LFSC) and 145–191 (CCSY…LIHC). Residue Asn194 is glycosylated (N-linked (GlcNAc...) asparagine). 2 Knot repeats span residues 210-257 (CCDR…LWQC) and 286-332 (CCSK…MLTC). N-linked (GlcNAc...) asparagine glycosylation is found at Asn291 and Asn346. 3 Kazal-like domains span residues 621-667 (KFTG…SCIS), 692-746 (SFGK…PCQP), and 749-783 (KSVE…HCQA). Disulfide bonds link Cys627-Cys652, Cys629-Cys648, Cys637-Cys665, Cys710-Cys729, Cys718-Cys744, and Cys755-Cys781. The GPI-anchor amidated serine moiety is linked to residue Ser936. The propeptide occupies 937 to 963 (PSVKVGPVLHCLFISFSFTLLKLMDYI).

The protein belongs to the RECK family. As to quaternary structure, interacts (via knot repeats) with WNT7A (via disordered linker region); the interaction is direct. Interacts (via knot repeats) with WNT7B (via disordered linker region); the interaction is direct. Interacts with ADGRA2; the interaction is direct. Localizes to the plasma membrane via its GPI-anchor. Released from the plasma membrane following cleavage of the GPI-anchor by GDPD5/GPE2.

The protein localises to the cell membrane. In terms of biological role, functions together with ADGRA2 to enable brain endothelial cells to selectively respond to Wnt7 signals (WNT7A or WNT7B). Plays a key role in Wnt7-specific responses: required for central nervous system (CNS) angiogenesis and blood-brain barrier regulation. Acts as a Wnt7-specific coactivator of canonical Wnt signaling by decoding Wnt ligands: acts by interacting specifically with the disordered linker region of Wnt7, thereby conferring ligand selectivity for Wnt7. ADGRA2 is then required to deliver RECK-bound Wnt7 to frizzled by assembling a higher-order RECK-ADGRA2-Fzd-LRP5-LRP6 complex. Also acts as a serine protease inhibitor. In Gallus gallus (Chicken), this protein is Reversion-inducing cysteine-rich protein with Kazal motifs.